We begin with the raw amino-acid sequence, 151 residues long: Deoxyuridine 5'-triphosphate nucleotidohydrolase (151 aa).

Residues 70–72 (RSG), asparagine 83, 87–89 (LID), and methionine 97 each bind substrate.

This sequence belongs to the dUTPase family. As to quaternary structure, homotrimer. Mg(2+) is required as a cofactor.

The catalysed reaction is dUTP + H2O = dUMP + diphosphate + H(+). Its pathway is pyrimidine metabolism; dUMP biosynthesis; dUMP from dCTP (dUTP route): step 2/2. In terms of biological role, this enzyme is involved in nucleotide metabolism: it produces dUMP, the immediate precursor of thymidine nucleotides and it decreases the intracellular concentration of dUTP so that uracil cannot be incorporated into DNA. The chain is Deoxyuridine 5'-triphosphate nucleotidohydrolase from Escherichia coli O45:K1 (strain S88 / ExPEC).